The primary structure comprises 320 residues: Agamous-like MADS-box protein AGL90 (320 aa).

The region spanning 1 to 59 (MKKVKLSLIANERSRKTSFMKRKNGIFKKLHELSTLCGVQACALIYSPFIPVPESWPSR) is the MADS-box domain. Residues 80 to 115 (KMMDQETHLMERITKAKEQLKNLAAENRELQVRRFM) adopt a coiled-coil conformation.

As to quaternary structure, interacts with AGL62.

The protein localises to the nucleus. Functionally, probable transcription factor. The chain is Agamous-like MADS-box protein AGL90 (AGL90) from Arabidopsis thaliana (Mouse-ear cress).